The primary structure comprises 35 residues: Dermonecrotic toxin LgSicTox-beta-LOXN4 (35 aa).

A Mg(2+)-binding site is contributed by D20.

It belongs to the arthropod phospholipase D family. Class II subfamily. The cofactor is Mg(2+). In terms of processing, contains 2 disulfide bonds. As to expression, expressed by the venom gland.

It localises to the secreted. The enzyme catalyses an N-(acyl)-sphingosylphosphocholine = an N-(acyl)-sphingosyl-1,3-cyclic phosphate + choline. It catalyses the reaction an N-(acyl)-sphingosylphosphoethanolamine = an N-(acyl)-sphingosyl-1,3-cyclic phosphate + ethanolamine. The catalysed reaction is a 1-acyl-sn-glycero-3-phosphocholine = a 1-acyl-sn-glycero-2,3-cyclic phosphate + choline. It carries out the reaction a 1-acyl-sn-glycero-3-phosphoethanolamine = a 1-acyl-sn-glycero-2,3-cyclic phosphate + ethanolamine. Its function is as follows. Dermonecrotic toxins cleave the phosphodiester linkage between the phosphate and headgroup of certain phospholipids (sphingolipid and lysolipid substrates), forming an alcohol (often choline) and a cyclic phosphate. This toxin acts on sphingomyelin (SM). It may also act on ceramide phosphoethanolamine (CPE), lysophosphatidylcholine (LPC) and lysophosphatidylethanolamine (LPE), but not on lysophosphatidylserine (LPS), and lysophosphatidylglycerol (LPG). It acts by transphosphatidylation, releasing exclusively cyclic phosphate products as second products. Induces dermonecrosis, hemolysis, increased vascular permeability, edema, inflammatory response, and platelet aggregation. This is Dermonecrotic toxin LgSicTox-beta-LOXN4 from Loxosceles gaucho (Spider).